We begin with the raw amino-acid sequence, 206 residues long: LexA repressor (206 aa).

The H-T-H motif DNA-binding region spans 28–48 (VREIGEAVGLASSSTVHGHLA). Catalysis depends on for autocatalytic cleavage activity residues S128 and K166.

Belongs to the peptidase S24 family. As to quaternary structure, homodimer.

It catalyses the reaction Hydrolysis of Ala-|-Gly bond in repressor LexA.. In terms of biological role, represses a number of genes involved in the response to DNA damage (SOS response), including recA and lexA. In the presence of single-stranded DNA, RecA interacts with LexA causing an autocatalytic cleavage which disrupts the DNA-binding part of LexA, leading to derepression of the SOS regulon and eventually DNA repair. In Bacillus velezensis (strain DSM 23117 / BGSC 10A6 / LMG 26770 / FZB42) (Bacillus amyloliquefaciens subsp. plantarum), this protein is LexA repressor.